A 391-amino-acid chain; its full sequence is tRNA-specific 2-thiouridylase MnmA (391 aa).

ATP-binding positions include 9-16 (GMSGGVDS) and M35. Residues 95-97 (NPD) form an interaction with target base in tRNA region. The active-site Nucleophile is C100. A disulfide bond links C100 and C196. Residue G124 participates in ATP binding. The tract at residues 146-148 (KDQ) is interaction with tRNA. C196 (cysteine persulfide intermediate) is an active-site residue. Positions 308–309 (RY) are interaction with tRNA.

It belongs to the MnmA/TRMU family.

It is found in the cytoplasm. It carries out the reaction S-sulfanyl-L-cysteinyl-[protein] + uridine(34) in tRNA + AH2 + ATP = 2-thiouridine(34) in tRNA + L-cysteinyl-[protein] + A + AMP + diphosphate + H(+). Functionally, catalyzes the 2-thiolation of uridine at the wobble position (U34) of tRNA, leading to the formation of s(2)U34. The sequence is that of tRNA-specific 2-thiouridylase MnmA from Burkholderia cenocepacia (strain HI2424).